The chain runs to 198 residues: Recombination protein RecR (198 aa).

A C4-type zinc finger spans residues 56-71; that stretch reads CTECRDFSETKICAIC. A Toprim domain is found at 79–174; it reads HQLCVVESPP…RPSRLAQGLP (96 aa).

This sequence belongs to the RecR family.

In terms of biological role, may play a role in DNA repair. It seems to be involved in an RecBC-independent recombinational process of DNA repair. It may act with RecF and RecO. In Xylella fastidiosa (strain Temecula1 / ATCC 700964), this protein is Recombination protein RecR.